The sequence spans 56 residues: Large ribosomal subunit protein bL32 (56 aa).

Residues Met1–Val56 are disordered. Basic residues predominate over residues Arg7–Arg16.

The protein belongs to the bacterial ribosomal protein bL32 family.

This chain is Large ribosomal subunit protein bL32, found in Chromohalobacter salexigens (strain ATCC BAA-138 / DSM 3043 / CIP 106854 / NCIMB 13768 / 1H11).